We begin with the raw amino-acid sequence, 384 residues long: Actin-binding Rho-activating protein (384 aa).

The span at 1–11 shows a compositional bias: basic and acidic residues; sequence MARGEKGRGEG. Disordered stretches follow at residues 1 to 20, 32 to 159, and 181 to 211; these read MARG…LRKV, GWQQ…SPTR, and EQEE…EQDG. The span at 35–47 shows a compositional bias: polar residues; that stretch reads QWANENSTRQAQE. The span at 134-145 shows a compositional bias: acidic residues; that stretch reads DGDEPEPEQPES. Ser-156 and Ser-191 each carry phosphoserine. Actin-binding regions lie at residues 202–302 and 303–384; these read ETEE…AERA and KRAE…TLLK. 2 interaction with actin regions span residues 243–288 and 355–384; these read SQVG…GDEG and MRAR…TLLK.

Binds F-actin and ABLIM1, ABLIM2 and ABLIM3. Interaction with ABLIM2 and ABLIM3 enhances activity. Specifically expressed in heart and skeletal muscles.

It is found in the cytoplasm. The protein resides in the myofibril. Its subcellular location is the sarcomere. The protein localises to the cytoskeleton. Functionally, acts as an activator of serum response factor (SRF)-dependent transcription possibly by inducing nuclear translocation of MKL1 or MKL2 and through a mechanism requiring Rho-actin signaling. This is Actin-binding Rho-activating protein (ABRA) from Sus scrofa (Pig).